Consider the following 567-residue polypeptide: Glutamine--tRNA ligase (567 aa).

Residues 47-57 (PEPNGYLHIGH) carry the 'HIGH' region motif. ATP is bound by residues 48 to 50 (EPN) and 54 to 60 (HIGHAKS). Residues Asp-80 and Tyr-225 each contribute to the L-glutamine site. ATP contacts are provided by residues Thr-244 and 274–275 (RL). The 'KMSKS' region signature appears at 281–285 (ITSKR).

The protein belongs to the class-I aminoacyl-tRNA synthetase family. Monomer.

Its subcellular location is the cytoplasm. The catalysed reaction is tRNA(Gln) + L-glutamine + ATP = L-glutaminyl-tRNA(Gln) + AMP + diphosphate. The chain is Glutamine--tRNA ligase from Pseudomonas putida (strain ATCC 47054 / DSM 6125 / CFBP 8728 / NCIMB 11950 / KT2440).